The following is a 293-amino-acid chain: Proline iminopeptidase (293 aa).

An AB hydrolase-1 domain is found at 28–277 (PLVLLHGGPG…NCSHMSFVQK (250 aa)). The active-site Nucleophile is the Ser-105. Asp-244 is a catalytic residue. His-271 serves as the catalytic Proton donor.

It belongs to the peptidase S33 family.

The protein resides in the cell envelope. The catalysed reaction is Release of N-terminal proline from a peptide.. Functionally, releases the N-terminal proline from various substrates. In Lactobacillus acidophilus (strain ATCC 700396 / NCK56 / N2 / NCFM), this protein is Proline iminopeptidase.